Consider the following 343-residue polypeptide: Biotin synthase 2 (343 aa).

The 228-residue stretch at 58-285 (NEVQLSTLLS…LTMVRLSAGR (228 aa)) folds into the Radical SAM core domain. Residues cysteine 73, cysteine 77, and cysteine 80 each coordinate [4Fe-4S] cluster. Positions 117, 148, 208, and 280 each coordinate [2Fe-2S] cluster.

Belongs to the radical SAM superfamily. Biotin synthase family. In terms of assembly, homodimer. [4Fe-4S] cluster is required as a cofactor. Requires [2Fe-2S] cluster as cofactor.

The enzyme catalyses (4R,5S)-dethiobiotin + (sulfur carrier)-SH + 2 reduced [2Fe-2S]-[ferredoxin] + 2 S-adenosyl-L-methionine = (sulfur carrier)-H + biotin + 2 5'-deoxyadenosine + 2 L-methionine + 2 oxidized [2Fe-2S]-[ferredoxin]. It functions in the pathway cofactor biosynthesis; biotin biosynthesis; biotin from 7,8-diaminononanoate: step 2/2. Catalyzes the conversion of dethiobiotin (DTB) to biotin by the insertion of a sulfur atom into dethiobiotin via a radical-based mechanism. This is Biotin synthase 2 from Polaromonas sp. (strain JS666 / ATCC BAA-500).